Here is a 504-residue protein sequence, read N- to C-terminus: Maturase K (504 aa).

This sequence belongs to the intron maturase 2 family. MatK subfamily.

The protein localises to the plastid. It is found in the chloroplast. In terms of biological role, usually encoded in the trnK tRNA gene intron. Probably assists in splicing its own and other chloroplast group II introns. The protein is Maturase K of Matthiola incana (Common stock).